The chain runs to 392 residues: MNNFKRVFLIVMDSVGIGEAPDARDFNDVGANTLGHIAENMNGLNMPTMASLGLSNIRKIEGIEASAQPRAHYTKMQEASNGKDTMTGHWEIMGLHIEKPFRTFPDGFPDELIEELEQKTGRKVIGNKPASGTEILDELGQQHMDTGSLIVYTSADSVLQIAAHEEIIPIDEQYRICEIARELTLDEKYMVGRVIARPFIGEPGAFERTSNRHDYALKPFGRTVMNELKDNNYDVLALGKISDIYDGEGVTESIRTKDNNDGMVQLRKSMDKSFTGLNFLNLVDFDAKYGHRRDPVGYGKALEEFDEQLPEIIEQLHDDDLLIITADHGNDPIHHGTDHTREYVPLVVYHNQIKQAKELPIRKTFADIGATIADNFGIKLPEHGESFLNDIK.

Positions 13, 286, 291, 327, 328, and 339 each coordinate Mn(2+).

It belongs to the phosphopentomutase family. Requires Mn(2+) as cofactor.

The protein localises to the cytoplasm. It catalyses the reaction 2-deoxy-alpha-D-ribose 1-phosphate = 2-deoxy-D-ribose 5-phosphate. The catalysed reaction is alpha-D-ribose 1-phosphate = D-ribose 5-phosphate. Its pathway is carbohydrate degradation; 2-deoxy-D-ribose 1-phosphate degradation; D-glyceraldehyde 3-phosphate and acetaldehyde from 2-deoxy-alpha-D-ribose 1-phosphate: step 1/2. Functionally, isomerase that catalyzes the conversion of deoxy-ribose 1-phosphate (dRib-1-P) and ribose 1-phosphate (Rib-1-P) to deoxy-ribose 5-phosphate (dRib-5-P) and ribose 5-phosphate (Rib-5-P), respectively. This Oceanobacillus iheyensis (strain DSM 14371 / CIP 107618 / JCM 11309 / KCTC 3954 / HTE831) protein is Phosphopentomutase.